The following is a 206-amino-acid chain: Probable peptidyl-tRNA hydrolase (206 aa).

His-48 (proton acceptor) is an active-site residue. TRNA is bound by residues Tyr-83, Asn-85, and Asn-137.

Belongs to the PTH family.

The protein resides in the mitochondrion. It carries out the reaction an N-acyl-L-alpha-aminoacyl-tRNA + H2O = an N-acyl-L-amino acid + a tRNA + H(+). Functionally, peptidyl-tRNA hydrolase involved in the recycling of tRNA-Lys from diacetyl-lysyl-tRNA-Lys and is important for mitochondrial function. This is Probable peptidyl-tRNA hydrolase (pth1) from Schizosaccharomyces pombe (strain 972 / ATCC 24843) (Fission yeast).